Consider the following 126-residue polypeptide: DNA-directed RNA polymerase I subunit RPA12 (126 aa).

6 residues coordinate Zn(2+): Cys-20, Cys-23, Cys-38, Cys-41, Cys-87, and Cys-90. A C4-type zinc finger spans residues 20–41; that stretch reads CSDCGSVLPLPGAQDTVTCTRC. The segment at 83–123 adopts a TFIIS-type zinc-finger fold; sequence VDRRCPRCGHEGMAYHTRQMRSADEGQTVFYTCTNCKFQEK. The Hairpin motif lies at 106–107; the sequence is DE. Residues Cys-115 and Cys-118 each coordinate Zn(2+).

This sequence belongs to the archaeal RpoM/eukaryotic RPA12/RPB9/RPC11 RNA polymerase family. In terms of assembly, component of the RNA polymerase I (Pol I) complex consisting of 13 subunits: a ten-subunit catalytic core composed of POLR1A/RPA1, POLR1B/RPA2, POLR1C/RPAC1, POLR1D/RPAC2, POLR1H/RPA12, POLR2E/RPABC1, POLR2F/RPABC2, POLR2H/RPABC3, POLR2K/RPABC4 and POLR2L/RPABC5; a mobile stalk subunit POLR1F/RPA43 protruding from the core and additional subunits homologous to general transcription factors POLR1E/RPA49 and POLR1G/RPA34. Part of Pol I pre-initiation complex (PIC), in which Pol I core assembles with RRN3 and promoter-bound UTBF and SL1/TIF-IB complex.

The protein localises to the nucleus. It localises to the nucleolus. In terms of biological role, core component of RNA polymerase I (Pol I), a DNA-dependent RNA polymerase which synthesizes ribosomal RNA precursors using the four ribonucleoside triphosphates as substrates. Can mediate Pol I proofreading of the nascent RNA transcript. Anchors into the Pol I active site to monitor transcription fidelity and cleave mis-incorporated 5'-ribonucleotides. The sequence is that of DNA-directed RNA polymerase I subunit RPA12 from Macaca mulatta (Rhesus macaque).